Here is a 769-residue protein sequence, read N- to C-terminus: MLRQRPQLLLLAGLLALQSVLSQECTNYKVSTCRDCIESGPGCAWCQKLNFTGQGEPDSIRCDTRAELLSKGCPADDIMEPKSLAETRDSQAGSRKQLSPQEVTLYLRPGQAVAFNVTFRRAKGYPIDLYYLMDLSYSMVDDLVNVKKLGGDLLRALNGITESGRIGFGSFVDKTVLPFVNTHPEKLRNPCPNKEKECQPPFAFRHVLKLTDNSKQFETEVGKQLISGNLDAPEGGLDAMMQVAACPEEIGWRNVTRLLVFATDDGFHFAGDGKLGAILTPNDGRCHLEDNLYKSSNEFDYPSVGQLAHKLAESNIQPIFAVTKKMVKTYEKLTEIIPKSAVGELSEDSRNVVELIKNAYNKLSSRVFLDHSTLPDTLKVTYDSFCSNGKSQVDQPRGDCDGVQINVPITFQVKVTATECIQQQSFTIRALGFTDTVTVRVLPQCECQCRDASRDGSICGGRGSMECGVCRCDAGYIGKNCECQTQGRSSQELEGSCRKDNSSIICSGLGDCICGQCVCHTSDVPNKKIYGQFCECDNVNCERYDGQVCGGEKRGLCFCGTCRCDEQYEGSACQCLKSTQGCLNLDGVECSGRGRCRCNVCQCDPGYQPPLCSECPGCPVPCAGFAPCTECLKFDKGPFAKNCSAACGQTKLLSSPVPGRKCKERDSEGCWMTYTLVQRDGRDRYDVHVDDMLECVKGPNIAAIVGGTVGGVVLVGILLLVIWKALTHLSDLREYHRFEKEKLKSQWNNDNPLFKSATTTVMNPKFAES.

An N-terminal signal peptide occupies residues 1–22; that stretch reads MLRQRPQLLLLAGLLALQSVLS. Glutamine 23 is subject to Pyrrolidone carboxylic acid. The Extracellular portion of the chain corresponds to 23–700; sequence QECTNYKVST…DMLECVKGPN (678 aa). The PSI domain maps to 24 to 74; the sequence is ECTNYKVSTCRDCIESGPGCAWCQKLNFTGQGEPDSIRCDTRAELLSKGCP. 28 cysteine pairs are disulfide-bonded: cysteine 25–cysteine 43, cysteine 33–cysteine 447, cysteine 36–cysteine 62, cysteine 46–cysteine 73, cysteine 191–cysteine 198, cysteine 246–cysteine 286, cysteine 386–cysteine 400, cysteine 420–cysteine 445, cysteine 449–cysteine 467, cysteine 459–cysteine 470, cysteine 472–cysteine 481, cysteine 483–cysteine 514, cysteine 497–cysteine 512, cysteine 506–cysteine 517, cysteine 519–cysteine 534, cysteine 536–cysteine 559, cysteine 541–cysteine 557, cysteine 549–cysteine 562, cysteine 564–cysteine 573, cysteine 575–cysteine 598, cysteine 582–cysteine 596, cysteine 590–cysteine 601, cysteine 603–cysteine 612, cysteine 615–cysteine 618, cysteine 622–cysteine 662, cysteine 628–cysteine 647, cysteine 631–cysteine 643, and cysteine 670–cysteine 695. 2 N-linked (GlcNAc...) asparagine glycosylation sites follow: asparagine 50 and asparagine 116. One can recognise a VWFA domain in the interval 124–363; that stretch reads GYPIDLYYLM…ELIKNAYNKL (240 aa). 2 residues coordinate Mg(2+): serine 136 and serine 138. 4 residues coordinate Ca(2+): serine 138, aspartate 141, aspartate 142, and aspartate 173. 4 residues coordinate Ca(2+): asparagine 229, aspartate 231, proline 233, and glutamate 234. Residue glutamate 234 coordinates Mg(2+). A glycan (N-linked (GlcNAc...) asparagine) is linked at asparagine 254. Residues aspartate 264 and glutamate 347 each coordinate Ca(2+). A Cell attachment site motif is present at residues 397–399; that stretch reads RGD. I-EGF domains follow at residues 449–482, 483–535, 536–574, and 575–613; these read CRDA…KNCE, CQTQ…QFCE, CDNV…SACQ, and CLKS…PLCS. Asparagine 501 carries an N-linked (GlcNAc...) asparagine glycan. The N-linked (GlcNAc...) asparagine glycan is linked to asparagine 642. The helical transmembrane segment at 701–723 threads the bilayer; sequence IAAIVGGTVGGVVLVGILLLVIW. At 724–769 the chain is on the cytoplasmic side; it reads KALTHLSDLREYHRFEKEKLKSQWNNDNPLFKSATTTVMNPKFAES. A phosphoserine mark is found at serine 745 and serine 756. Residues threonine 758 and threonine 760 each carry the phosphothreonine modification.

Belongs to the integrin beta chain family. As to quaternary structure, heterodimer of an alpha and a beta subunit. The ITGB2 beta subunit associates with the ITGAL, ITGAM, ITGAX or ITGAD alpha subunits. Found in a complex with CD177 and ITGAM/CD11b. Interacts with FGR. Interacts with COPS5 and RANBP9. Interacts with FLNA (via filamin repeats 4, 9, 12, 17, 19, 21, and 23). Interacts with THBD. In terms of processing, both Ser-745 and Ser-756 become phosphorylated when T-cells are exposed to phorbol esters. Phosphorylation on Thr-758 (but not on Ser-756) allows interaction with 14-3-3 proteins.

Its subcellular location is the cell membrane. It localises to the membrane raft. In terms of biological role, integrin ITGAL/ITGB2 is a receptor for ICAM1, ICAM2, ICAM3 and ICAM4. Integrin ITGAL/ITGB2 is also a receptor for the secreted form of ubiquitin-like protein ISG15; the interaction is mediated by ITGAL. Integrins ITGAM/ITGB2 and ITGAX/ITGB2 are receptors for the iC3b fragment of the third complement component and for fibrinogen. Integrin ITGAX/ITGB2 recognizes the sequence G-P-R in fibrinogen alpha-chain. Integrin ITGAM/ITGB2 recognizes P1 and P2 peptides of fibrinogen gamma chain. Integrin ITGAM/ITGB2 is also a receptor for factor X. Integrin ITGAD/ITGB2 is a receptor for ICAM3 and VCAM1. Contributes to natural killer cell cytotoxicity. Involved in leukocyte adhesion and transmigration of leukocytes including T-cells and neutrophils. Triggers neutrophil transmigration during lung injury through PTK2B/PYK2-mediated activation. Integrin ITGAL/ITGB2 in association with ICAM3, contributes to apoptotic neutrophil phagocytosis by macrophages. This Bos taurus (Bovine) protein is Integrin beta-2 (ITGB2).